The primary structure comprises 183 residues: Adenine phosphoribosyltransferase (183 aa).

The protein belongs to the purine/pyrimidine phosphoribosyltransferase family. In terms of assembly, homodimer.

Its subcellular location is the cytoplasm. The enzyme catalyses AMP + diphosphate = 5-phospho-alpha-D-ribose 1-diphosphate + adenine. It participates in purine metabolism; AMP biosynthesis via salvage pathway; AMP from adenine: step 1/1. Its function is as follows. Catalyzes a salvage reaction resulting in the formation of AMP, that is energically less costly than de novo synthesis. In Shewanella halifaxensis (strain HAW-EB4), this protein is Adenine phosphoribosyltransferase.